The chain runs to 251 residues: 1-(5-phosphoribosyl)-5-[(5-phosphoribosylamino)methylideneamino] imidazole-4-carboxamide isomerase (251 aa).

Asp8 acts as the Proton acceptor in catalysis. The Proton donor role is filled by Asp131.

This sequence belongs to the HisA/HisF family.

Its subcellular location is the cytoplasm. It carries out the reaction 1-(5-phospho-beta-D-ribosyl)-5-[(5-phospho-beta-D-ribosylamino)methylideneamino]imidazole-4-carboxamide = 5-[(5-phospho-1-deoxy-D-ribulos-1-ylimino)methylamino]-1-(5-phospho-beta-D-ribosyl)imidazole-4-carboxamide. It participates in amino-acid biosynthesis; L-histidine biosynthesis; L-histidine from 5-phospho-alpha-D-ribose 1-diphosphate: step 4/9. The protein is 1-(5-phosphoribosyl)-5-[(5-phosphoribosylamino)methylideneamino] imidazole-4-carboxamide isomerase of Burkholderia cenocepacia (strain ATCC BAA-245 / DSM 16553 / LMG 16656 / NCTC 13227 / J2315 / CF5610) (Burkholderia cepacia (strain J2315)).